The primary structure comprises 122 residues: Large ribosomal subunit protein uL18 (122 aa).

Belongs to the universal ribosomal protein uL18 family. In terms of assembly, part of the 50S ribosomal subunit; part of the 5S rRNA/L5/L18/L25 subcomplex. Contacts the 5S and 23S rRNAs.

Functionally, this is one of the proteins that bind and probably mediate the attachment of the 5S RNA into the large ribosomal subunit, where it forms part of the central protuberance. The polypeptide is Large ribosomal subunit protein uL18 (Thermotoga petrophila (strain ATCC BAA-488 / DSM 13995 / JCM 10881 / RKU-1)).